Consider the following 257-residue polypeptide: MSRLSLTRSPVSPLAAQGIPLPAQLTKSNAPVHIDVGGHMYTSSLATLTKYPDSRISRLFNGTEPIVLDSLKQHYFIDRDGEIFRYILSYLRTSKLLLPEDFKEFQLLYEEARYYQLTPMVKELERWKQEREQRRSAQPCECLVVRVTPDLGERIAVSGDKSLIEEIFPETGDVMCNSVNAGWNQDPTHVIRFPLNGYCRLNSVQVLERLFQKGFSMVASCGGGVDSSQFSEYILSREDRRCQTSHTPIRIKQEPLD.

Phosphoserine is present on residues serine 9 and serine 12. In terms of domain architecture, BTB spans 30–100 (APVHIDVGGH…LRTSKLLLPE (71 aa)).

This chain is BTB/POZ domain-containing protein kctd15-like (kctd15l), found in Danio rerio (Zebrafish).